The chain runs to 298 residues: Small ribosomal subunit protein uS2 (298 aa).

A disordered region spans residues 232 to 298 (ETFEGDDIPS…TAEAEEPAAE (67 aa)). The span at 234-250 (FEGDDIPSAIDFEDETP) shows a compositional bias: acidic residues. The span at 251 to 276 (EPVAEVADAEVAAAEPVAEAAPTAEA) shows a compositional bias: low complexity.

This sequence belongs to the universal ribosomal protein uS2 family.

In Acaryochloris marina (strain MBIC 11017), this protein is Small ribosomal subunit protein uS2.